A 584-amino-acid polypeptide reads, in one-letter code: Ubiquitin-like-specific protease 1D (584 aa).

Disordered stretches follow at residues 28–64 (DKED…PKLL) and 99–323 (DLEE…QAAE). Over residues 99–120 (DLEEEKQRRVLEGSKMEVDRSS) the composition is skewed to basic and acidic residues. A compositionally biased stretch (low complexity) spans 121 to 132 (KVVSSTSSGSDV). Composition is skewed to basic and acidic residues over residues 142-165 (DTSR…KEVS) and 176-196 (PKTD…LGCE). A compositionally biased stretch (basic residues) spans 197–207 (RRKHKAGRKPV). Basic and acidic residues predominate over residues 221 to 253 (GKAEHSAKQFDSGLKESKGNKKSKEPYGKKRPM). The segment covering 261–274 (IDDDDDDDDDDDND) has biased composition (acidic residues). Basic and acidic residues predominate over residues 275–286 (TSGHETPREWSW). Residues histidine 438, aspartate 461, and cysteine 525 contribute to the active site.

The protein belongs to the peptidase C48 family.

The protein localises to the nucleus speckle. Functionally, protease that catalyzes two essential functions in the SUMO pathway: processing of full-length SUMOs to their mature forms and deconjugation of SUMO from targeted proteins. Cleaves precursors of SUM1 and SUM2, but not of SUM3 or SUM5. Able to release SUM1 and SUM2 from conjugates, but unable to cleave SUM3. Protease activity mainly directed at deconjugating SUM1 and SUM2 from their target proteins. Regulates salt stress responses and flowering time. Redundant with ULP1C. In Arabidopsis thaliana (Mouse-ear cress), this protein is Ubiquitin-like-specific protease 1D (ULP1D).